The following is a 242-amino-acid chain: Probable transcriptional regulatory protein BURPS1710b_1385 (242 aa).

Belongs to the TACO1 family.

It is found in the cytoplasm. This chain is Probable transcriptional regulatory protein BURPS1710b_1385, found in Burkholderia pseudomallei (strain 1710b).